We begin with the raw amino-acid sequence, 1712 residues long: Collagen alpha-2(IV) chain (1712 aa).

A signal peptide spans 1 to 25; sequence MGRDQRAVAGPALRRWLLLGTVTVG. Positions 26–183 are cleaved as a propeptide — N-terminal propeptide (7S domain); sequence FLAQSVLAGV…LPKEERDRYR (158 aa). Disordered regions lie at residues 60 to 237, 302 to 448, 507 to 640, 690 to 906, and 1157 to 1480; these read RGQP…GFYG, GLRG…PDGF, INGE…DAGL, GLPG…SPGF, and TGPP…GLPG. A compositionally biased stretch (low complexity) spans 68 to 84; the sequence is PQGYNGPPGLQGFPGLQ. Gly residues predominate over residues 121–130; it reads GHPGQGGPRG. An N-linked (GlcNAc...) asparagine glycan is attached at Asn138. Residues 140 to 153 show a composition bias toward low complexity; it reads TQGDSGPQGPPGSE. Residues 175 to 186 show a composition bias toward basic and acidic residues; it reads PKEERDRYRGEP. The segment at 184 to 1484 is triple-helical region; the sequence is GEPGEPGLVG…SPGLPGMPGR (1301 aa). 2 stretches are compositionally biased toward pro residues: residues 215–224 and 433–445; these read RPGPPGPPGP and PPGPPGLPGPPGP. Basic and acidic residues-rich tracts occupy residues 511-520 and 571-582; these read PGRKGDRGDP and KGDDGSPGRDGL. Composition is skewed to low complexity over residues 628 to 640 and 698 to 710; these read LKGQRGFPGDAGL and TGAKGLRGIPGFA. Residues 711 to 720 are compositionally biased toward gly residues; it reads GADGGPGPRG. Positions 721 to 730 are enriched in low complexity; sequence LPGDAGREGF. The segment covering 752–766 has biased composition (pro residues); the sequence is DGSPGPIGLPGPDGP. Composition is skewed to low complexity over residues 769 to 778, 813 to 823, 831 to 844, 1302 to 1328, and 1400 to 1421; these read ERGLPGEVLG, MPGMPGLKGQP, QPGLYGPPGLHGFP, GSAALPGSKGDTGNPGAPGTPGTKGWA, and QPGTVGPQGRRGPPGAPGEMGP. The region spanning 1489–1712 is the Collagen IV NC1 domain; the sequence is GYLLVKHSQT…SRCQVCMKNL (224 aa). The residue at position 1490 (Tyr1490) is a 3'-bromotyrosine. 6 disulfides stabilise this stretch: Cys1504-Cys1593, Cys1537-Cys1590, Cys1549-Cys1555, Cys1612-Cys1708, Cys1646-Cys1705, and Cys1658-Cys1665.

The protein belongs to the type IV collagen family. As to quaternary structure, there are six type IV collagen isoforms, alpha 1(IV)-alpha 6(IV), each of which can form a triple helix structure with 2 other chains to generate type IV collagen network. Interacts with EFEMP2. Prolines at the third position of the tripeptide repeating unit (G-X-Y) are hydroxylated in some or all of the chains. Post-translationally, type IV collagens contain numerous cysteine residues which are involved in inter- and intramolecular disulfide bonding. 12 of these, located in the NC1 domain, are conserved in all known type IV collagens. In terms of processing, the trimeric structure of the NC1 domains is stabilized by covalent bonds between Lys and Met residues. Proteolytic processing produces the C-terminal NC1 peptide, canstatin.

The protein localises to the secreted. Its subcellular location is the extracellular space. The protein resides in the extracellular matrix. It is found in the basement membrane. Functionally, type IV collagen is the major structural component of glomerular basement membranes (GBM), forming a 'chicken-wire' meshwork together with laminins, proteoglycans and entactin/nidogen. Canstatin, a cleavage product corresponding to the collagen alpha 2(IV) NC1 domain, possesses both anti-angiogenic and anti-tumor cell activity. It inhibits proliferation and migration of endothelial cells, reduces mitochondrial membrane potential, and induces apoptosis. Specifically induces Fas-dependent apoptosis and activates procaspase-8 and -9 activity. Ligand for alphavbeta3 and alphavbeta5 integrins. The sequence is that of Collagen alpha-2(IV) chain from Homo sapiens (Human).